The following is an 83-amino-acid chain: Putative defensin-like protein 66 (83 aa).

Residues 1-22 form the signal peptide; it reads MGSSRLMITFIVVAMLAISSDL. 4 cysteine pairs are disulfide-bonded: cysteine 38-cysteine 82, cysteine 42-cysteine 65, cysteine 51-cysteine 80, and cysteine 55-cysteine 81.

Belongs to the DEFL family.

The protein localises to the secreted. The protein is Putative defensin-like protein 66 of Arabidopsis thaliana (Mouse-ear cress).